Here is a 229-residue protein sequence, read N- to C-terminus: MAKKKAFTPLLYLASIVFLPWWISLLFQKSLESWVTNWWNTRQSETFLNDIEEKSILEKFIELEELLFLEEMIKEYSETHLQNLRIGIHKETIQLIKIHNEGRIHTILHFSTNIICFIILSGYSIFGNKELVILNSWAQEFLYNLSDTIKAFSLLLLTDLCIGFHSPHGWELMIGFVYKDFGFVHNDQIISGLVSTFPVILDTIFKYWIFRYLNRVSPSLVVIYHSMND.

3 helical membrane-spanning segments follow: residues 7–27 (FTPLLYLASIVFLPWWISLLF), 107–127 (ILHFSTNIICFIILSGYSIFG), and 189–209 (IISGLVSTFPVILDTIFKYWI).

This sequence belongs to the CemA family.

The protein resides in the plastid. It localises to the chloroplast inner membrane. The catalysed reaction is K(+)(in) + H(+)(out) = K(+)(out) + H(+)(in). Functionally, contributes to K(+)/H(+) antiport activity by supporting proton efflux to control proton extrusion and homeostasis in chloroplasts in a light-dependent manner to modulate photosynthesis. Prevents excessive induction of non-photochemical quenching (NPQ) under continuous-light conditions. Indirectly promotes efficient inorganic carbon uptake into chloroplasts. The polypeptide is Potassium/proton antiporter CemA (Guizotia abyssinica (Niger)).